The primary structure comprises 601 residues: Glutathione-regulated potassium-efflux system protein KefB (601 aa).

13 helical membrane passes run 4–24 (SDFLLAGVLFLFAAVAAVPLA), 29–49 (IGAVLGYLLAGIAIGPWGLGF), 55–75 (EILHFSELGVVFLMFIIGLEL), 87–107 (IFGVGAAQVLLSAALLAGLLM), 115–135 (AAVVGGIGLAMSSTAMALQLM), 152–172 (VLLFQDLAVIPALALVPLLAG), 177–197 (HFDWMKIGMKVLAFVGMLIGG), 207–227 (FIAASGVREVFTAATLLLVLG), 230–250 (LFMDALGLSMALGTFIAGVLL), 268–288 (GLLLGLFFISVGMSLNLGVLY), 291–311 (LLWVVISVVVLVAVKILVLYL), 324–344 (MQFAGVLSQGGEFAFVLFSTA), and 356–376 (ALLLVTVTLSMMTTPLLMKLV). The 120-residue stretch at 400-519 (KPQVIVVGFG…AGVTQFSRET (120 aa)) folds into the RCK N-terminal domain.

This sequence belongs to the monovalent cation:proton antiporter 2 (CPA2) transporter (TC 2.A.37) family. KefB subfamily. In terms of assembly, interacts with the regulatory subunit KefG.

It localises to the cell inner membrane. In terms of biological role, pore-forming subunit of a potassium efflux system that confers protection against electrophiles. Catalyzes K(+)/H(+) antiport. The sequence is that of Glutathione-regulated potassium-efflux system protein KefB from Escherichia coli O1:K1 / APEC.